Consider the following 187-residue polypeptide: MTVMEFFALSAGEWMCQRTSHHLAFRRSEGGRSRMQIATLSPADPAVIQVCELFKVDPRRAVGAARVQWNGEQEWDNEEYKGDVVLVPIPDPDNPMRGQLLRDQGYAEKVPVAGTYVMGSDGALTLYTEYEMTESEERIWFASPNLRLRASTVKRFGGFSMASFCSEVRKLSASPSPISAVAESRSL.

Belongs to the CpcS/CpeS biliprotein lyase family.

Covalently attaches a chromophore to Cys residue(s) of phycobiliproteins. This is Chromophore lyase CpcS/CpeS 2 from Synechococcus sp. (strain JA-3-3Ab) (Cyanobacteria bacterium Yellowstone A-Prime).